We begin with the raw amino-acid sequence, 760 residues long: Heat shock transcription factor (760 aa).

Disordered stretches follow at residues 1–132 (MIMN…PPVV) and 206–276 (FHPL…GPKT). Composition is skewed to polar residues over residues 19–31 (TESNSGNETSSPS) and 38–88 (RSGT…SNKL). The span at 119 to 130 (DYKDSIDLDKPP) shows a compositional bias: basic and acidic residues. The span at 221-247 (AGPANNSQQQQQQQQQDSSIPSDGISS) shows a compositional bias: low complexity. The DNA-binding element occupies 276-385 (TRPAFVMKIW…EDLLDKIVRN (110 aa)). Positions 414 to 467 (ELETIKMNQYVISEDLRRVRQDNKMLWQENYLNRERNQVQGRTLDKILKFLSVV) are involved in trimerization. Disordered stretches follow at residues 492 to 545 (TQYR…NNNN), 560 to 582 (LTNRAHSRRPSMSRTKSTPEGSI), 609 to 630 (HQPGATTNNNNHSSSTAISAPS), and 674 to 760 (QEQH…VSDH). The span at 515–539 (NSRFARDNNQTAQPTYESPLSTSDT) shows a compositional bias: polar residues. Ser570 bears the Phosphoserine mark. The residue at position 574 (Thr574) is a Phosphothreonine. Ser576 is subject to Phosphoserine. Thr577 is modified (phosphothreonine). Residues 613 to 628 (ATTNNNNHSSSTAISA) are compositionally biased toward low complexity. Positions 646-684 (RNLDDLEKHINKEGQSIQQVQDWIDKLAQEQHEKQQQQQ) form a coiled coil. Composition is skewed to polar residues over residues 701-722 (ATTTPSSNVPNGGHYNNGNISF) and 731-742 (PGSNVSSNINDS). Basic and acidic residues predominate over residues 744–760 (GNEKKSKKRSIEEVSDH).

This sequence belongs to the HSF family. As to quaternary structure, homotrimer. Homotrimerization increases the affinity of HSF1 to DNA. Interacts with HSP90. In terms of processing, activated by phosphorylation of at least Ser-570, Thr-574, Ser-576 and Thr-577 in response to heat shock. Additional unidentified residues are also phosphorylated in response to heat shock.

Its subcellular location is the nucleus. DNA-binding transcription factor that specifically binds heat shock promoter elements (HSE) and activates transcription. With HSP90, is required for the modulation of the chaperone levels in response to growth temperature, rather than the activation of acute responses to sudden thermal transitions. Activated during infection and contributes to full virulence. This is Heat shock transcription factor from Candida albicans (strain SC5314 / ATCC MYA-2876) (Yeast).